Consider the following 260-residue polypeptide: Malonyl-[acyl-carrier protein] O-methyltransferase (260 aa).

It belongs to the methyltransferase superfamily.

The enzyme catalyses malonyl-[ACP] + S-adenosyl-L-methionine = malonyl-[ACP] methyl ester + S-adenosyl-L-homocysteine. The protein operates within cofactor biosynthesis; biotin biosynthesis. Its function is as follows. Converts the free carboxyl group of a malonyl-thioester to its methyl ester by transfer of a methyl group from S-adenosyl-L-methionine (SAM). It allows to synthesize pimeloyl-ACP via the fatty acid synthetic pathway. This chain is Malonyl-[acyl-carrier protein] O-methyltransferase, found in Chlorobium phaeovibrioides (strain DSM 265 / 1930) (Prosthecochloris vibrioformis (strain DSM 265)).